Reading from the N-terminus, the 525-residue chain is Peptide chain release factor 3 (525 aa).

The 268-residue stretch at 9-276 folds into the tr-type G domain; it reads AKRRTFAIIS…GFTRYAPAPQ (268 aa). GTP-binding positions include 18–25, 86–90, and 140–143; these read SHPDAGKT, DTPGH, and NKFD.

It belongs to the TRAFAC class translation factor GTPase superfamily. Classic translation factor GTPase family. PrfC subfamily.

Its subcellular location is the cytoplasm. Functionally, increases the formation of ribosomal termination complexes and stimulates activities of RF-1 and RF-2. It binds guanine nucleotides and has strong preference for UGA stop codons. It may interact directly with the ribosome. The stimulation of RF-1 and RF-2 is significantly reduced by GTP and GDP, but not by GMP. This is Peptide chain release factor 3 from Francisella tularensis subsp. mediasiatica (strain FSC147).